We begin with the raw amino-acid sequence, 185 residues long: MATLPLSLIFAFKNRPKCVITRAQYVKVMAWQEVTAKRSNELGSPTRRKSSIQELVFLEDDVQALNEAFPQGEKADTSWAVTVLFYLAKLVFGILGLALSIIWLLHIIVFMLVNPPAFPFLNQVFIQLDSAWGLLGTTAFAIFCYYLIMSVISGEMHSIHPMKYQGTLMNSFLFNVAIILLCSTR.

Residues 1-89 (MATLPLSLIF…AVTVLFYLAK (89 aa)) lie on the Cytoplasmic side of the membrane. Residues 90–110 (LVFGILGLALSIIWLLHIIVF) traverse the membrane as a helical segment. At 111–131 (MLVNPPAFPFLNQVFIQLDSA) the chain is on the extracellular side. The chain crosses the membrane as a helical span at residues 132 to 152 (WGLLGTTAFAIFCYYLIMSVI). Topologically, residues 153–163 (SGEMHSIHPMK) are cytoplasmic. The chain crosses the membrane as a helical span at residues 164-184 (YQGTLMNSFLFNVAIILLCST). Position 185 (Arg-185) is a topological domain, extracellular.

This sequence belongs to the Casparian strip membrane proteins (CASP) family. Homodimer and heterodimers.

The protein resides in the cell membrane. The chain is CASP-like protein SELMODRAFT_413556 from Selaginella moellendorffii (Spikemoss).